Consider the following 211-residue polypeptide: Pyridoxine/pyridoxamine 5'-phosphate oxidase (211 aa).

Substrate is bound by residues 7–10 and lysine 65; that span reads RREY. Residues 60–65, 75–76, arginine 81, lysine 82, and glutamine 104 each bind FMN; these read RIVLLK and YT. The substrate site is built by tyrosine 122, arginine 126, and serine 130. Residues 139–140 and tryptophan 184 contribute to the FMN site; that span reads QS. 190 to 192 is a substrate binding site; it reads RLH. Arginine 194 is a binding site for FMN.

Belongs to the pyridoxamine 5'-phosphate oxidase family. Homodimer. FMN is required as a cofactor.

It catalyses the reaction pyridoxamine 5'-phosphate + O2 + H2O = pyridoxal 5'-phosphate + H2O2 + NH4(+). The catalysed reaction is pyridoxine 5'-phosphate + O2 = pyridoxal 5'-phosphate + H2O2. The protein operates within cofactor metabolism; pyridoxal 5'-phosphate salvage; pyridoxal 5'-phosphate from pyridoxamine 5'-phosphate: step 1/1. It participates in cofactor metabolism; pyridoxal 5'-phosphate salvage; pyridoxal 5'-phosphate from pyridoxine 5'-phosphate: step 1/1. Catalyzes the oxidation of either pyridoxine 5'-phosphate (PNP) or pyridoxamine 5'-phosphate (PMP) into pyridoxal 5'-phosphate (PLP). This chain is Pyridoxine/pyridoxamine 5'-phosphate oxidase, found in Vibrio cholerae serotype O1 (strain ATCC 39315 / El Tor Inaba N16961).